Consider the following 342-residue polypeptide: S-adenosylmethionine:tRNA ribosyltransferase-isomerase (342 aa).

This sequence belongs to the QueA family. In terms of assembly, monomer.

It is found in the cytoplasm. It carries out the reaction 7-aminomethyl-7-carbaguanosine(34) in tRNA + S-adenosyl-L-methionine = epoxyqueuosine(34) in tRNA + adenine + L-methionine + 2 H(+). The protein operates within tRNA modification; tRNA-queuosine biosynthesis. Transfers and isomerizes the ribose moiety from AdoMet to the 7-aminomethyl group of 7-deazaguanine (preQ1-tRNA) to give epoxyqueuosine (oQ-tRNA). The sequence is that of S-adenosylmethionine:tRNA ribosyltransferase-isomerase from Streptococcus pyogenes serotype M6 (strain ATCC BAA-946 / MGAS10394).